We begin with the raw amino-acid sequence, 151 residues long: MDRNHAARNSAPLPLSAAHILLPSPSLSSPAPSPQLRSLSCTTSAAATPVPVPHHCLRCCDPPPPPPPPTPSPSISLLPFPFSDGPRLALNPVIPDDHFSSEMDTTTGGALRCRNQHLFLLQPAGQNAGTGPAQKLKTDETRCYERRGGSQ.

A disordered region spans residues 123–151 (PAGQNAGTGPAQKLKTDETRCYERRGGSQ). The segment covering 136–151 (LKTDETRCYERRGGSQ) has biased composition (basic and acidic residues).

This is an uncharacterized protein from Triticum aestivum (Wheat).